The primary structure comprises 220 residues: N-(5'-phosphoribosyl)anthranilate isomerase (220 aa).

This sequence belongs to the TrpF family.

The enzyme catalyses N-(5-phospho-beta-D-ribosyl)anthranilate = 1-(2-carboxyphenylamino)-1-deoxy-D-ribulose 5-phosphate. It participates in amino-acid biosynthesis; L-tryptophan biosynthesis; L-tryptophan from chorismate: step 3/5. The chain is N-(5'-phosphoribosyl)anthranilate isomerase from Leptothrix cholodnii (strain ATCC 51168 / LMG 8142 / SP-6) (Leptothrix discophora (strain SP-6)).